The chain runs to 1074 residues: MERFAAVDDQYDPDAVEDGVFEYWDDVDAYEQTKAHRADGEDYFFVDGPPYTSGAAHMGTTWNKTLKDCYIRYLRMQGYNVTDRPGYDMHGLPIETKVEERLDFENKKDIEQFGEENFIEECKDFAEEQLEGLQTDFQDFGVWMDWDDPYKTVNPEYMEAAWWGFQQAHERDLVEQGQRSINQCPRCETGIANNEVEYHDVGKPSIYVKFPLAEQDGSLVIWTTTPWTIVANTFVAADGDLEYVGVDAEKDGDTERLYLAEACVEDVLKAGRYDDYEVVEELSGEEMVGWAYEHPLAEEVPDHAQGEGSGQVYTADYVEADRTGLVHSAPGHGEEDFERGQELDLEIFCPVGSDGVYTDDAGKYAGTFVRDANDEVIDDLDENGVLLSSEPGHTVREGQCWRCDTDIVRIVTDQWFITVTDIKDELLANIEDSEWYPQWARDNRFRDFVEDAPDWNVSRQRYWGIPIPIWLPEDWSGDMDDAIVVGDREELAERVDQDIDPENVDLHKGTVDDLTITEDSTTYTRVGDVFDVWLDSSVATWGTVNYPEQTEDFEELWPADLIMEAHDQTRGWFWSQLGMSTAATGEIPYKQVLMHGYANMPDGRGMSKSKGVLIDPHEVIEKHGRDPMRLFLLSVTAQGEDMNFSWEETAEMQRRLNILWNVARFPLPYMRADDFDPEETTVEDLRDDLELVDEWVLSRLQSVTEAMTDSMDDFENDKAVDELLEFVVEDVSRFYIQVVRERMWEEEDSASKQAAYATLYRVLESVAALFAPFTPFVAEQVYGALTGDAGHPTVHMCDWPEVDADLHDPALEREIEVVREVEEAGSNARQQAERKLRWPVTRVVVDVDSDDVADAVRAQEAIIADRLNARAVEVVGADDEWGELQYSAEADMSELGPAFGDDAGRVMNALNEARVTEQSLDTLEGTVREALGEDVDLTEEMVEFRRETPEGVTGTEFTALDGGGVVYVDTALTEDIESEGYAREVIRRIQEMRKDLELDIEERIAVDLTIDDERVDSLVREHEALIKEEVRADELDGVEDGHRKTWEVEGTDMEIAIAPCEADQREASEQASGD.

The short motif at 50 to 60 (PYTSGAAHMGT) is the 'HIGH' region element. Residues 605–609 (GMSKS) carry the 'KMSKS' region motif. Lysine 608 serves as a coordination point for ATP.

The protein belongs to the class-I aminoacyl-tRNA synthetase family. IleS type 2 subfamily. As to quaternary structure, monomer. Requires Zn(2+) as cofactor.

It localises to the cytoplasm. It catalyses the reaction tRNA(Ile) + L-isoleucine + ATP = L-isoleucyl-tRNA(Ile) + AMP + diphosphate. In terms of biological role, catalyzes the attachment of isoleucine to tRNA(Ile). As IleRS can inadvertently accommodate and process structurally similar amino acids such as valine, to avoid such errors it has two additional distinct tRNA(Ile)-dependent editing activities. One activity is designated as 'pretransfer' editing and involves the hydrolysis of activated Val-AMP. The other activity is designated 'posttransfer' editing and involves deacylation of mischarged Val-tRNA(Ile). This chain is Isoleucine--tRNA ligase, found in Haloarcula marismortui (strain ATCC 43049 / DSM 3752 / JCM 8966 / VKM B-1809) (Halobacterium marismortui).